A 418-amino-acid polypeptide reads, in one-letter code: Glutamyl-tRNA reductase (418 aa).

Substrate is bound by residues 49-52 (TCNR), serine 109, 114-116 (EPQ), and glutamine 120. Cysteine 50 serves as the catalytic Nucleophile. 189-194 (GAGETI) provides a ligand contact to NADP(+).

The protein belongs to the glutamyl-tRNA reductase family. As to quaternary structure, homodimer.

It catalyses the reaction (S)-4-amino-5-oxopentanoate + tRNA(Glu) + NADP(+) = L-glutamyl-tRNA(Glu) + NADPH + H(+). The protein operates within porphyrin-containing compound metabolism; protoporphyrin-IX biosynthesis; 5-aminolevulinate from L-glutamyl-tRNA(Glu): step 1/2. In terms of biological role, catalyzes the NADPH-dependent reduction of glutamyl-tRNA(Glu) to glutamate 1-semialdehyde (GSA). The sequence is that of Glutamyl-tRNA reductase from Escherichia coli O1:K1 / APEC.